We begin with the raw amino-acid sequence, 99 residues long: UPF0473 protein Athe_1150 (99 aa).

This sequence belongs to the UPF0473 family.

The chain is UPF0473 protein Athe_1150 from Caldicellulosiruptor bescii (strain ATCC BAA-1888 / DSM 6725 / KCTC 15123 / Z-1320) (Anaerocellum thermophilum).